The following is a 652-amino-acid chain: MNKITYMTIKISIPKYMSRIYHGLFDTGANICICKKKVLPDELWHKTENLVLRGFNDEKHVAEYRADNITIMIAKEKFIIPYIYAMDEMSPDIIIGATFYNKYSPIELDIGKGIIKFTKNNEKYPNYLVKYPKKRKLVPWTKGNPSVTETMENIGINQIESRNPIEEEINQILGTDIYGENPLEKWEKHKTLAKIELKNETDNIYKPPMLYQETDLPEFKMHIEEMIKEGFIEEKTNFEDKKYSSPAFIVNKHSEQKRGKTRMVIDYKDLNKKAKVVKYPIPNKDTLIHRSIQARYYSKFDCKSGFYHIKLEEDSKKYTAFTVPQGYYQWKVLPFGYHNSPSIFQQFMDRIFRPYYDFIIVYIDDILVFSKTIEEHKIHIAKFRDITLANGLIISKKKTELCKEKIDFLGVQIEQGGIELQPHIINKILEKHTKIKNKTELQSILGLLNQIRHFIPHLAQILLPIQKKLKIKDEEIWTWTKEDEEKIKLIQDYSKNLVIKMKYPINKEDMNWIIEVDASNNAYGSCLKYKPKNSKIEYLCRYNSGTFKENEQKYDINRKELIAVYQGLQSYSLFTCEGNKLVRTDNSQVYYWIKNDTNKKSIEFRNIKYLLAKIAVYNFEIQLIDGKTNIIADYLSRYNSSDTDGRYDEANT.

In terms of domain architecture, Peptidase A2 spans 21 to 99; sequence YHGLFDTGAN…SPDIIIGATF (79 aa). The active site involves Asp-26. In terms of domain architecture, Reverse transcriptase spans 231-413; sequence FIEEKTNFED…EKIDFLGVQI (183 aa). 3 residues coordinate Mg(2+): Asp-301, Asp-364, and Asp-365.

The catalysed reaction is DNA(n) + a 2'-deoxyribonucleoside 5'-triphosphate = DNA(n+1) + diphosphate. It carries out the reaction Endonucleolytic cleavage to 5'-phosphomonoester.. In terms of biological role, encodes for at least two polypeptides: protease (PR) and reverse transcriptase (RT). The protease processes the polyprotein in cis. Reverse transcriptase is multifunctional enzyme that converts the viral RNA genome into dsDNA in viral cytoplasmic capsids. This enzyme displays a DNA polymerase activity that can copy either DNA or RNA templates, and a ribonuclease H (RNase H) activity that cleaves the RNA strand of RNA-DNA heteroduplexes in a partially processive 3'- to 5'-endonucleasic mode. Neo-synthesized pregenomic RNA (pgRNA) are encapsidated, and reverse-transcribed inside the nucleocapsid. Partial (+)DNA is synthesized from the (-)DNA template and generates the relaxed circular DNA (RC-DNA) genome. After budding and infection, the RC-DNA migrates in the nucleus, and is converted into a plasmid-like covalently closed circular DNA (cccDNA). In Cassava vein mosaic virus (CsVMV), this protein is Putative enzymatic polyprotein.